We begin with the raw amino-acid sequence, 293 residues long: Acetylglutamate kinase (293 aa).

Residues 68-69 (GG), Arg90, and Asn189 each bind substrate.

It belongs to the acetylglutamate kinase family. ArgB subfamily.

It is found in the cytoplasm. The enzyme catalyses N-acetyl-L-glutamate + ATP = N-acetyl-L-glutamyl 5-phosphate + ADP. The protein operates within amino-acid biosynthesis; L-arginine biosynthesis; N(2)-acetyl-L-ornithine from L-glutamate: step 2/4. Its function is as follows. Catalyzes the ATP-dependent phosphorylation of N-acetyl-L-glutamate. The polypeptide is Acetylglutamate kinase (Mycobacterium marinum (strain ATCC BAA-535 / M)).